Consider the following 101-residue polypeptide: Small ribosomal subunit protein uS17 (101 aa).

Belongs to the universal ribosomal protein uS17 family. Part of the 30S ribosomal subunit.

Functionally, one of the primary rRNA binding proteins, it binds specifically to the 5'-end of 16S ribosomal RNA. The sequence is that of Small ribosomal subunit protein uS17 from Koribacter versatilis (strain Ellin345).